Here is a 121-residue protein sequence, read N- to C-terminus: Large ribosomal subunit protein uL14 (121 aa).

It belongs to the universal ribosomal protein uL14 family. As to quaternary structure, part of the 50S ribosomal subunit. Forms a cluster with proteins L3 and L19. In the 70S ribosome, L14 and L19 interact and together make contacts with the 16S rRNA in bridges B5 and B8.

In terms of biological role, binds to 23S rRNA. Forms part of two intersubunit bridges in the 70S ribosome. This chain is Large ribosomal subunit protein uL14, found in Synechococcus sp. (strain WH7803).